Reading from the N-terminus, the 157-residue chain is Ribonuclease H (157 aa).

The 146-residue stretch at 1–146 folds into the RNase H type-1 domain; that stretch reads MPDLFAYTDG…ADELARAGMA (146 aa). Residues D9, E52, D74, and D138 each coordinate Mg(2+).

It belongs to the RNase H family. In terms of assembly, monomer. It depends on Mg(2+) as a cofactor.

The protein resides in the cytoplasm. It catalyses the reaction Endonucleolytic cleavage to 5'-phosphomonoester.. In terms of biological role, endonuclease that specifically degrades the RNA of RNA-DNA hybrids. The sequence is that of Ribonuclease H from Ruegeria sp. (strain TM1040) (Silicibacter sp.).